The following is a 326-amino-acid chain: Vitamin B12 import system permease protein BtuC (326 aa).

9 helical membrane-spanning segments follow: residues 15 to 35 (WLLSLSLLVLLATLLSLCAGE), 61 to 81 (LAVLLVGAALALSGAVMQALF), 88 to 108 (PGLLGVSNGAGVGLIAAVLLG), 112 to 132 (LPGWALGLCAIAGALIITLIL), 146 to 166 (LLAGVALGIICSALMTWAIYF), 184 to 204 (GGVDWQQSWLMIALIPVLIWI), 240 to 260 (GWMVGVSVAMAGAIGFIGLVI), 274 to 294 (VLLPGCALAGAIALLLADVVA), and 302 to 322 (ELPIGVVTATLGAPVFIWLLL).

This sequence belongs to the binding-protein-dependent transport system permease family. FecCD subfamily. As to quaternary structure, the complex is composed of two ATP-binding proteins (BtuD), two transmembrane proteins (BtuC) and a solute-binding protein (BtuF).

It is found in the cell inner membrane. Its function is as follows. Part of the ABC transporter complex BtuCDF involved in vitamin B12 import. Involved in the translocation of the substrate across the membrane. This chain is Vitamin B12 import system permease protein BtuC, found in Salmonella agona (strain SL483).